The following is a 396-amino-acid chain: NADH-quinone oxidoreductase subunit D (396 aa).

This sequence belongs to the complex I 49 kDa subunit family. NDH-1 is composed of 14 different subunits. Subunits NuoB, C, D, E, F, and G constitute the peripheral sector of the complex.

Its subcellular location is the cell inner membrane. It catalyses the reaction a quinone + NADH + 5 H(+)(in) = a quinol + NAD(+) + 4 H(+)(out). Its function is as follows. NDH-1 shuttles electrons from NADH, via FMN and iron-sulfur (Fe-S) centers, to quinones in the respiratory chain. The immediate electron acceptor for the enzyme in this species is believed to be ubiquinone. Couples the redox reaction to proton translocation (for every two electrons transferred, four hydrogen ions are translocated across the cytoplasmic membrane), and thus conserves the redox energy in a proton gradient. The protein is NADH-quinone oxidoreductase subunit D of Brucella canis (strain ATCC 23365 / NCTC 10854 / RM-666).